The primary structure comprises 612 residues: Citryl-spermidine/3,4-dihydroxybenzoyl-citryl-spermidine:spermidine ligase (612 aa).

ATP-binding positions include 282-284 (SMR), K298, R310, Y390, and E461.

The protein belongs to the IucA/IucC family. In terms of assembly, homodimer.

The enzyme catalyses N(8)-citryl-spermidine + spermidine + ATP = N(8),N'(8)-citryl-bis(spermidine) + AMP + diphosphate + H(+). The catalysed reaction is N(1)-(3,4-dihydroxybenzoyl)-N(8)-citryl-spermidine + spermidine + ATP = N(1)-(3,4-dihydroxybenzoyl)-N(8),N'(8)-citryl-bis(spermidine) + AMP + diphosphate + H(+). Its pathway is siderophore biosynthesis; petrobactin biosynthesis. Involved in the biosynthesis of petrobactin, a catecholate siderophore that functions in both iron acquisition and virulence. Catalyzes the ATP-dependent condensation of spermidine with N(8)-citryl-spermidine or N(1)-(3,4-dihydroxbenzoyl)-N(8)-citryl-spermidine, two intermediates in petrobactin biosynthesis pathway. The protein is Citryl-spermidine/3,4-dihydroxybenzoyl-citryl-spermidine:spermidine ligase of Bacillus anthracis.